The sequence spans 914 residues: Chlorate reductase subunit alpha (914 aa).

Positions methionine 1–alanine 32 form a signal peptide, tat-type signal. The 64-residue stretch at aspartate 62–aspartate 125 folds into the 4Fe-4S Mo/W bis-MGD-type domain. [4Fe-4S] cluster is bound by residues histidine 69, cysteine 73, cysteine 77, and cysteine 111. Mo-bis(molybdopterin guanine dinucleotide) is bound at residue aspartate 205.

This sequence belongs to the prokaryotic molybdopterin-containing oxidoreductase family. In terms of assembly, heterotrimer of alpha, beta and gamma subunits. [4Fe-4S] cluster serves as cofactor. Mo-bis(molybdopterin guanine dinucleotide) is required as a cofactor. Post-translationally, predicted to be exported by the Tat system. The position of the signal peptide cleavage has not been experimentally proven.

The protein localises to the periplasm. It catalyses the reaction chlorate + AH2 = chlorite + A + H2O. In terms of biological role, terminal reductase that allows anaerobic growth on chlorate as the sole respiratory oxidant. The polypeptide is Chlorate reductase subunit alpha (clrA) (Ideonella dechloratans).